A 397-amino-acid polypeptide reads, in one-letter code: 2,3-bisphosphoglycerate-independent phosphoglycerate mutase (397 aa).

The protein belongs to the BPG-independent phosphoglycerate mutase family. A-PGAM subfamily.

It carries out the reaction (2R)-2-phosphoglycerate = (2R)-3-phosphoglycerate. It participates in carbohydrate degradation; glycolysis; pyruvate from D-glyceraldehyde 3-phosphate: step 3/5. Functionally, catalyzes the interconversion of 2-phosphoglycerate and 3-phosphoglycerate. The polypeptide is 2,3-bisphosphoglycerate-independent phosphoglycerate mutase (apgM) (Methanosarcina mazei (strain ATCC BAA-159 / DSM 3647 / Goe1 / Go1 / JCM 11833 / OCM 88) (Methanosarcina frisia)).